The following is a 244-amino-acid chain: Tegument protein UL51 (244 aa).

A lipid anchor (S-palmitoyl cysteine; by host) is attached at C9. Positions 175–244 (TAGLGATEAP…SSTEAPLLLA (70 aa)) are disordered. Residues 210–220 (RPGPVPPADPT) show a composition bias toward pro residues.

This sequence belongs to the herpesviridae UL51 family. In terms of assembly, oligomerizes. Interacts with UL7; this interaction mediates UL7 incorporation to virions. Post-translationally, phosphorylated. In terms of processing, palmitoylation is necessary for Golgi localization.

It is found in the virion tegument. The protein resides in the host cytoplasm. Its subcellular location is the host Golgi apparatus. Its function is as follows. Plays several roles during the time course of infection, including egress of virus particles from the perinuclear space and secondary envelopment of cytoplasmic capsids that bud into specific trans-Golgi network (TGN)-derived membranes. This Human herpesvirus 2 (strain HG52) (HHV-2) protein is Tegument protein UL51.